The chain runs to 124 residues: Small ribosomal subunit protein bS6 (124 aa).

Positions 96 to 124 are disordered; that stretch reads ETGPSPMMKEVQREEAKKAAAAQPAEAQA. The span at 114–124 shows a compositional bias: low complexity; the sequence is AAAAQPAEAQA.

It belongs to the bacterial ribosomal protein bS6 family.

Functionally, binds together with bS18 to 16S ribosomal RNA. In Burkholderia orbicola (strain AU 1054), this protein is Small ribosomal subunit protein bS6.